Here is a 482-residue protein sequence, read N- to C-terminus: PHD finger protein At3g20280 (482 aa).

The segment at 45 to 97 adopts a PHD-type zinc-finger fold; that stretch reads AMACQICEVTINEMDTLLICDACEKAYHLKCLQGNNMKGVPKSEWHCSRCVQA. Disordered regions lie at residues 188–210 and 314–482; these read TNIGSQGSKENVACGANSPAPVS and SSNS…ENAA. The span at 314-324 shows a compositional bias: low complexity; that stretch reads SSNSQQAVSHS. 2 stretches are compositionally biased toward polar residues: residues 377-386 and 393-428; these read ACQNHPTASP and QDSTITAAPSVTQEDSAFNTEKTPPQPLSVSSNYDS. Residues 447–482 show a composition bias toward basic and acidic residues; it reads DSEKGKGLNGLDDRHQEQPSEPEFYKSDSVKEENAA.

The chain is PHD finger protein At3g20280 from Arabidopsis thaliana (Mouse-ear cress).